The following is a 59-amino-acid chain: UPF0434 protein Sputw3181_2540 (59 aa).

Belongs to the UPF0434 family.

The protein is UPF0434 protein Sputw3181_2540 of Shewanella sp. (strain W3-18-1).